The chain runs to 396 residues: Probable sugar efflux transporter (396 aa).

A run of 12 helical transmembrane segments spans residues 15–35, 50–70, 81–101, 103–123, 136–156, 170–190, 209–229, 246–266, 275–295, 299–319, 333–353, and 364–384; these read VVTLAVAAFIFNTTEFVPVGL, VGIMLTIYAWVVALMSLPFML, LICLFVVFIASHVLSFLSWSF, VLVISRIGVAFAHAIFWSITA, AQALSLIATGTALAMVLGLPL, FFAIGIGAFITLLCLIKLLPL, PALMSIYLLTVVVVTAHYTAY, FATALLLLLGGAGIIGSVIFG, ALVSTAIALLLVCLALLLPAA, IHLGVLSIFWGIAMMIIGLGM, VAMALFSGIFNIGIGAGALVG, and MIGYVGAVPAFAALIWSIIIF.

Belongs to the major facilitator superfamily. SotB (TC 2.A.1.2) family.

It localises to the cell inner membrane. Involved in the efflux of sugars. The physiological role may be the reduction of the intracellular concentration of toxic sugars or sugar metabolites. The chain is Probable sugar efflux transporter from Escherichia coli O17:K52:H18 (strain UMN026 / ExPEC).